We begin with the raw amino-acid sequence, 160 residues long: Eosinophil cationic protein (160 aa).

Residues 1–27 (MVPKLFTSQICLLLLLGLSGVGGSLHA) form the signal peptide. The segment at 28-72 (KPRQFTRAQWFAIQHVSLNPPQCTTAMRVINNYQRRCKDQNTFLR) is required for nearly all of the bactericidal activities; partially involved in LPS-binding. Histidine 42 functions as the Proton acceptor in the catalytic mechanism. Intrachain disulfides connect cysteine 50–cysteine 110, cysteine 64–cysteine 123, cysteine 82–cysteine 138, and cysteine 89–cysteine 98. At tyrosine 60 the chain carries 3'-nitrotyrosine. 65-69 (KDQNT) lines the substrate pocket. Residues asparagine 86, asparagine 92, asparagine 111, and asparagine 119 are each glycosylated (N-linked (GlcNAc...) asparagine). The active-site Proton donor is the histidine 155.

It belongs to the pancreatic ribonuclease family. As to quaternary structure, interacts with bacterial lipopolysaccharide (LPS) and lipoteichoic acid (LTA). In vitro interacts with phospholipid bilayers.

The protein resides in the secreted. In terms of biological role, cytotoxin and helminthotoxin with low-efficiency ribonuclease activity. Possesses a wide variety of biological activities. Exhibits antibacterial activity. The polypeptide is Eosinophil cationic protein (RNASE3) (Pongo pygmaeus (Bornean orangutan)).